Reading from the N-terminus, the 498-residue chain is Glutamyl-tRNA(Gln) amidotransferase subunit A (498 aa).

Catalysis depends on charge relay system residues K80 and S155. Residues 132 to 159 (SSTENSAYGPTRNPWDTDRVPGGSSGGS) form a disordered region. The Acyl-ester intermediate role is filled by S179.

Belongs to the amidase family. GatA subfamily. In terms of assembly, heterotrimer of A, B and C subunits.

It carries out the reaction L-glutamyl-tRNA(Gln) + L-glutamine + ATP + H2O = L-glutaminyl-tRNA(Gln) + L-glutamate + ADP + phosphate + H(+). Its function is as follows. Allows the formation of correctly charged Gln-tRNA(Gln) through the transamidation of misacylated Glu-tRNA(Gln) in organisms which lack glutaminyl-tRNA synthetase. The reaction takes place in the presence of glutamine and ATP through an activated gamma-phospho-Glu-tRNA(Gln). The chain is Glutamyl-tRNA(Gln) amidotransferase subunit A from Thermobifida fusca (strain YX).